A 416-amino-acid polypeptide reads, in one-letter code: Formyl-CoA:oxalate CoA-transferase (416 aa).

CoA is bound by residues glutamine 17–serine 18, arginine 38, leucine 72–lysine 75, asparagine 96–histidine 98, histidine 104, and lysine 137–glutamate 140. Aspartate 169 serves as the catalytic Nucleophile. Glycine 248–glutamine 250 lines the substrate pocket. Glutamine 273–glutamine 275 serves as a coordination point for CoA.

It belongs to the CoA-transferase III family. Frc subfamily. In terms of assembly, homodimer.

It carries out the reaction formyl-CoA + oxalate = oxalyl-CoA + formate. It functions in the pathway metabolic intermediate degradation; oxalate degradation; CO(2) and formate from oxalate: step 1/2. In terms of biological role, involved in the catabolism of oxalate and in the adapatation to low pH via the induction of the oxalate-dependent acid tolerance response (ATR). Catalyzes the transfer of the CoA moiety from formyl-CoA to oxalate. This chain is Formyl-CoA:oxalate CoA-transferase, found in Escherichia coli O17:K52:H18 (strain UMN026 / ExPEC).